A 345-amino-acid chain; its full sequence is Tetraacyldisaccharide 4'-kinase (345 aa).

61–68 (TAGGTGKT) contacts ATP.

Belongs to the LpxK family.

The enzyme catalyses a lipid A disaccharide + ATP = a lipid IVA + ADP + H(+). Its pathway is glycolipid biosynthesis; lipid IV(A) biosynthesis; lipid IV(A) from (3R)-3-hydroxytetradecanoyl-[acyl-carrier-protein] and UDP-N-acetyl-alpha-D-glucosamine: step 6/6. Transfers the gamma-phosphate of ATP to the 4'-position of a tetraacyldisaccharide 1-phosphate intermediate (termed DS-1-P) to form tetraacyldisaccharide 1,4'-bis-phosphate (lipid IVA). The polypeptide is Tetraacyldisaccharide 4'-kinase (Xanthomonas euvesicatoria pv. vesicatoria (strain 85-10) (Xanthomonas campestris pv. vesicatoria)).